The chain runs to 368 residues: MLYYLLKYINDAFDPPGLGVIEFLTFRASAAAVTSLLICLVAGPAFIKYLKGRIIEPVKEEAPPEHRKKKELPTMGGIMIIFAIEVSVFLWARFDDPHVWLIMVAVFWMGVIGFLDDYMKVVLKVKGGLPPRYKLIGQVLLGLFIGLYTWFDPAFSVLLSTTTVPFFKNLTIDYGIFYIPVVIFIITAVSNAVNLTDGLDGLASGSSAIVVFALGGFAYLAGNAVYASYLKIPFIPGGGEIAVVSMAIVMACVGFLWFNSNPAEIIMGDTGSLALGSAIAVIALLIKQELLLPVLAGIFFLETLSVSLQVLYFKYTKMRFGQGRRIFLMAPLHHHFQLKGWAEQKIVIRFWIVTVLFFLASLMTLKLR.

Transmembrane regions (helical) follow at residues 30 to 50 (AAAV…IKYL), 72 to 92 (LPTM…FLWA), 99 to 119 (VWLI…DDYM), 139 to 159 (VLLG…SVLL), 170 to 190 (LTID…TAVS), 201 to 221 (GLAS…AYLA), 238 to 258 (GGEI…FLWF), 264 to 286 (EIIM…ALLI), and 345 to 365 (KIVI…LMTL).

It belongs to the glycosyltransferase 4 family. MraY subfamily. Mg(2+) is required as a cofactor.

The protein resides in the cell inner membrane. The catalysed reaction is UDP-N-acetyl-alpha-D-muramoyl-L-alanyl-gamma-D-glutamyl-meso-2,6-diaminopimeloyl-D-alanyl-D-alanine + di-trans,octa-cis-undecaprenyl phosphate = di-trans,octa-cis-undecaprenyl diphospho-N-acetyl-alpha-D-muramoyl-L-alanyl-D-glutamyl-meso-2,6-diaminopimeloyl-D-alanyl-D-alanine + UMP. It functions in the pathway cell wall biogenesis; peptidoglycan biosynthesis. Functionally, catalyzes the initial step of the lipid cycle reactions in the biosynthesis of the cell wall peptidoglycan: transfers peptidoglycan precursor phospho-MurNAc-pentapeptide from UDP-MurNAc-pentapeptide onto the lipid carrier undecaprenyl phosphate, yielding undecaprenyl-pyrophosphoryl-MurNAc-pentapeptide, known as lipid I. The chain is Phospho-N-acetylmuramoyl-pentapeptide-transferase from Chlorobium limicola (strain DSM 245 / NBRC 103803 / 6330).